The following is a 314-amino-acid chain: Acetaldehyde dehydrogenase (314 aa).

Residue 15–18 (SGNI) participates in NAD(+) binding. Cysteine 133 (acyl-thioester intermediate) is an active-site residue. NAD(+) is bound by residues 164-172 (SAGPGTRAN) and asparagine 292.

It belongs to the acetaldehyde dehydrogenase family.

The enzyme catalyses acetaldehyde + NAD(+) + CoA = acetyl-CoA + NADH + H(+). The chain is Acetaldehyde dehydrogenase from Paraburkholderia phytofirmans (strain DSM 17436 / LMG 22146 / PsJN) (Burkholderia phytofirmans).